A 418-amino-acid chain; its full sequence is UDP-N-acetylglucosamine 1-carboxyvinyltransferase 2 (418 aa).

22-23 (KN) provides a ligand contact to phosphoenolpyruvate. Arg-92 is a binding site for UDP-N-acetyl-alpha-D-glucosamine. The active-site Proton donor is the Cys-116. Cys-116 carries the post-translational modification 2-(S-cysteinyl)pyruvic acid O-phosphothioketal. Positions 305 and 327 each coordinate UDP-N-acetyl-alpha-D-glucosamine.

This sequence belongs to the EPSP synthase family. MurA subfamily.

Its subcellular location is the cytoplasm. It catalyses the reaction phosphoenolpyruvate + UDP-N-acetyl-alpha-D-glucosamine = UDP-N-acetyl-3-O-(1-carboxyvinyl)-alpha-D-glucosamine + phosphate. The protein operates within cell wall biogenesis; peptidoglycan biosynthesis. Functionally, cell wall formation. Adds enolpyruvyl to UDP-N-acetylglucosamine. This Mesorhizobium japonicum (strain LMG 29417 / CECT 9101 / MAFF 303099) (Mesorhizobium loti (strain MAFF 303099)) protein is UDP-N-acetylglucosamine 1-carboxyvinyltransferase 2.